We begin with the raw amino-acid sequence, 34 residues long: Photosystem II reaction center protein M (34 aa).

Residues 6-26 (LGAIATALFVFIPCVFLILLY) form a helical membrane-spanning segment.

The protein belongs to the PsbM family. In terms of assembly, PSII is composed of 1 copy each of membrane proteins PsbA, PsbB, PsbC, PsbD, PsbE, PsbF, PsbH, PsbI, PsbJ, PsbK, PsbL, PsbM, PsbT, PsbX, PsbY, PsbZ, Psb30/Ycf12, peripheral proteins PsbO, CyanoQ (PsbQ), PsbU, PsbV and a large number of cofactors. It forms dimeric complexes.

The protein localises to the cellular thylakoid membrane. One of the components of the core complex of photosystem II (PSII). PSII is a light-driven water:plastoquinone oxidoreductase that uses light energy to abstract electrons from H(2)O, generating O(2) and a proton gradient subsequently used for ATP formation. It consists of a core antenna complex that captures photons, and an electron transfer chain that converts photonic excitation into a charge separation. This subunit is found at the monomer-monomer interface. This chain is Photosystem II reaction center protein M, found in Acaryochloris marina (strain MBIC 11017).